Here is a 216-residue protein sequence, read N- to C-terminus: Dimethylamine corrinoid protein 1 (216 aa).

The 91-residue stretch at 1-91 folds into the B12-binding N-terminal domain; that stretch reads MTSKEELLQE…DMPAGTETKK (91 aa). A B12-binding domain is found at 92–216; sequence LGVIVNGTVE…AKAKELLVGK (125 aa). His-105 contacts methylcob(III)alamin.

It belongs to the methylamine corrinoid protein family.

It participates in one-carbon metabolism; methanogenesis from dimethylamine. Functionally, acts as a methyl group carrier between MtbB and MtbA. The sequence is that of Dimethylamine corrinoid protein 1 (mtbC1) from Methanosarcina mazei (strain ATCC BAA-159 / DSM 3647 / Goe1 / Go1 / JCM 11833 / OCM 88) (Methanosarcina frisia).